A 115-amino-acid polypeptide reads, in one-letter code: NADH-ubiquinone oxidoreductase chain 3 (115 aa).

A run of 3 helical transmembrane segments spans residues 3 to 23 (LMLV…IAFW), 55 to 75 (FFLV…LLPL), and 87 to 107 (VLIM…YEWI).

It belongs to the complex I subunit 3 family. In terms of assembly, core subunit of respiratory chain NADH dehydrogenase (Complex I) which is composed of 45 different subunits. Interacts with TMEM186. Interacts with TMEM242.

Its subcellular location is the mitochondrion inner membrane. The catalysed reaction is a ubiquinone + NADH + 5 H(+)(in) = a ubiquinol + NAD(+) + 4 H(+)(out). Its function is as follows. Core subunit of the mitochondrial membrane respiratory chain NADH dehydrogenase (Complex I) which catalyzes electron transfer from NADH through the respiratory chain, using ubiquinone as an electron acceptor. Essential for the catalytic activity of complex I. The protein is NADH-ubiquinone oxidoreductase chain 3 of Oryctolagus cuniculus (Rabbit).